The following is an 843-amino-acid chain: Axin-2 (843 aa).

A disordered region spans residues 1 to 75; sequence MSSAMLVTCL…EGRASPDSPL (75 aa). Residues 21–30 carry the Tankyrase-binding motif motif; the sequence is APRPPVPGEE. A compositionally biased stretch (basic and acidic residues) spans 56–69; sequence RRNEDGLGEPEGRA. The RGS domain occupies 81–200; it reads SLHSLLGDQD…LTSDIYLEYV (120 aa). Residues 327-413 are interaction with GSK3B; sequence VGSKKQLQRE…REGSELTLNS (87 aa). The interval 334-393 is interaction with SIAH1 and SIAH2; sequence QREMHRSVKANGQVSLPHFPRTHRLPKEMTPVEPATFAAELISRLEKLKLELESRHSLEE. 4 disordered regions span residues 396–435, 447–494, 561–674, and 718–748; these read QQIREDEEREGSELTLNSREGAPTQHPLSLLPSGSYEEDP, LKTP…AASP, APET…RTTP, and ASQQRDRNHSATVQTGATPFSNPSLAPEDHK. The interval 413–476 is interaction with beta-catenin; sequence SREGAPTQHP…PDHHHHHHSQ (64 aa). Low complexity-rich tracts occupy residues 477–494 and 588–597; these read YHSLLPPGGKLPPAAASP and PGLALPAREG. Positions 727–741 are enriched in polar residues; the sequence is SATVQTGATPFSNPS. The 83-residue stretch at 761–843 folds into the DIX domain; sequence ASELVVTYFF…RILGKVERID (83 aa).

As to quaternary structure, interacts with glycogen synthase kinase-3 beta (GSK3B) and beta-catenin. The interaction between axin and beta-catenin occurs via the armadillo repeats contained in beta-catenin. Interacts with SMAD7 and RNF111. Interacts with ANKRD6. Interacts with SIAH1. Interacts with SIAH2. Post-translationally, probably phosphorylated by GSK3B and dephosphorylated by PP2A. ADP-ribosylated by tankyrase TNKS and TNKS2. Poly-ADP-ribosylated protein is recognized by RNF146, followed by ubiquitination and subsequent activation of the Wnt signaling pathway. In terms of processing, ubiquitinated by RNF146 when poly-ADP-ribosylated, leading to its degradation and subsequent activation of the Wnt signaling pathway. Deubiquitinated by USP34, deubiquitinated downstream of beta-catenin stabilization step: deubiquitination is important Wnt signaling to positively regulate beta-catenin (CTNBB1)-mediated transcription. In terms of tissue distribution, expressed in brain and lymphoblast.

The protein localises to the cytoplasm. In terms of biological role, inhibitor of the Wnt signaling pathway. Down-regulates beta-catenin. Probably facilitate the phosphorylation of beta-catenin and APC by GSK3B. The chain is Axin-2 (AXIN2) from Homo sapiens (Human).